Reading from the N-terminus, the 765-residue chain is Putative ankyrin repeat protein L371 (765 aa).

ANK repeat units lie at residues N60–V89, E93–G122, K132–Y161, D165–A194, Q198–I227, L232–H261, E265–S295, D322–Y353, and T357–V395.

The sequence is that of Putative ankyrin repeat protein L371 from Acanthamoeba polyphaga mimivirus (APMV).